Reading from the N-terminus, the 156-residue chain is Transcription inhibitor protein Gfh1 (156 aa).

Residues 1-74 adopt a coiled-coil conformation; it reads MAREVKLTKA…LEDILSRAVI (74 aa). The Zn(2+) site is built by Glu20 and Glu24.

It belongs to the GreA/GreB family. As to quaternary structure, interacts with RNAP.

Its function is as follows. Inhibits all catalytic activities of RNA polymerase (RNAP) by partially occluding its substrate-binding site and preventing NTP binding. This is Transcription inhibitor protein Gfh1 (gfh1) from Thermus thermophilus (strain ATCC 27634 / DSM 579 / HB8).